We begin with the raw amino-acid sequence, 194 residues long: Xanthine phosphoribosyltransferase (194 aa).

Xanthine is bound by residues L20 and N27. 128-132 serves as a coordination point for 5-phospho-alpha-D-ribose 1-diphosphate; that stretch reads ANGCA. K156 contacts xanthine.

The protein belongs to the purine/pyrimidine phosphoribosyltransferase family. Xpt subfamily. Homodimer.

The protein resides in the cytoplasm. It carries out the reaction XMP + diphosphate = xanthine + 5-phospho-alpha-D-ribose 1-diphosphate. Its pathway is purine metabolism; XMP biosynthesis via salvage pathway; XMP from xanthine: step 1/1. Converts the preformed base xanthine, a product of nucleic acid breakdown, to xanthosine 5'-monophosphate (XMP), so it can be reused for RNA or DNA synthesis. This is Xanthine phosphoribosyltransferase from Lachnoclostridium phytofermentans (strain ATCC 700394 / DSM 18823 / ISDg) (Clostridium phytofermentans).